Here is a 289-residue protein sequence, read N- to C-terminus: tRNA pseudouridine synthase B (289 aa).

D38 serves as the catalytic Nucleophile.

Belongs to the pseudouridine synthase TruB family. Type 1 subfamily.

It catalyses the reaction uridine(55) in tRNA = pseudouridine(55) in tRNA. Functionally, responsible for synthesis of pseudouridine from uracil-55 in the psi GC loop of transfer RNAs. The polypeptide is tRNA pseudouridine synthase B (Clostridium novyi (strain NT)).